A 231-amino-acid chain; its full sequence is mRNA-decapping enzyme subunit 1 (231 aa).

The disordered stretch occupies residues glutamine 92–serine 120. A compositionally biased stretch (low complexity) spans asparagine 101 to serine 120.

The protein belongs to the DCP1 family. Component of the decapping complex composed of DCP1 and DCP2. Interacts with mRNAs, DHH1, LSM1, LSM2, LSM3, LSM4, LSM5, LSM6, LSM7, and the cap-binding proteins PAB1 and TIF4632/eIF-4G. Phosphorylated.

The protein resides in the cytoplasm. Its subcellular location is the P-body. Its function is as follows. Component of the decapping complex necessary for the degradation of mRNAs, both in normal mRNA turnover and in nonsense-mediated mRNA decay. Removes the 7-methyl guanine cap structure from mRNA molecules, yielding a 5'-phosphorylated mRNA fragment and 7m-GDP. Decapping is the major pathway of mRNA degradation in yeast. It occurs through deadenylation, decapping and subsequent 5' to 3' exonucleolytic decay of the transcript body. DCP1 is activated by the DEAD-box helicase DHH1 and destabilizes the eIF-4F cap-binding complex from the mRNA. The chain is mRNA-decapping enzyme subunit 1 (DCP1) from Saccharomyces cerevisiae (strain ATCC 204508 / S288c) (Baker's yeast).